We begin with the raw amino-acid sequence, 266 residues long: Small ribosomal subunit protein uS2 (266 aa).

The tract at residues 229–254 (RTSDKEADTTTEEVAQEEVTDTKADE) is disordered. A compositionally biased stretch (acidic residues) spans 237-247 (TTTEEVAQEEV).

It belongs to the universal ribosomal protein uS2 family.

In Flavobacterium psychrophilum (strain ATCC 49511 / DSM 21280 / CIP 103535 / JIP02/86), this protein is Small ribosomal subunit protein uS2.